The sequence spans 389 residues: Probable serine/threonine-protein kinase PBL11 (389 aa).

Residue glycine 2 is the site of N-myristoyl glycine attachment. The S-palmitoyl cysteine moiety is linked to residue cysteine 4. Residues 68-353 enclose the Protein kinase domain; it reads FRPDSVVGEG…NEIVKTMEEL (286 aa). Residues 74–82 and lysine 106 each bind ATP; that span reads VGEGGFGCV. At tyrosine 151 the chain carries Phosphotyrosine. Aspartate 203 functions as the Proton acceptor in the catalytic mechanism. Phosphoserine occurs at positions 207 and 237. Phosphothreonine is present on residues threonine 238 and threonine 243. A Phosphotyrosine modification is found at tyrosine 251.

Belongs to the protein kinase superfamily. Ser/Thr protein kinase family. Roots, leaves and stems.

It is found in the cell membrane. It carries out the reaction L-seryl-[protein] + ATP = O-phospho-L-seryl-[protein] + ADP + H(+). It catalyses the reaction L-threonyl-[protein] + ATP = O-phospho-L-threonyl-[protein] + ADP + H(+). In terms of biological role, may play a role in the regulation of plant growth and development. May be involved in plant defense signaling. The polypeptide is Probable serine/threonine-protein kinase PBL11 (Arabidopsis thaliana (Mouse-ear cress)).